We begin with the raw amino-acid sequence, 622 residues long: Golgin subfamily A member 6-like protein 7 (622 aa).

Disordered stretches follow at residues 1-82 (MMSE…QQAL), 251-496 (RKHE…RKQV), and 511-580 (EKMQ…HDNR). 6 stretches are compositionally biased toward basic and acidic residues: residues 57–74 (SPED…ENKA), 251–275 (RKHE…REQE), 283–332 (EQMR…KQEE), 339–367 (EQMR…KQEE), 374–388 (EQMR…KQEE), and 395–420 (EQMR…KQEE). Residues 100–534 (KTELETALHD…EKRREKKERM (435 aa)) adopt a coiled-coil conformation. Residues 477–489 (QMGEQEEQMGEQE) show a composition bias toward acidic residues. Basic and acidic residues-rich tracts occupy residues 511-546 (EKMQ…ERCS) and 567-580 (PARE…HDNR).

This sequence belongs to the GOLGA6 family.

The polypeptide is Golgin subfamily A member 6-like protein 7 (Homo sapiens (Human)).